A 479-amino-acid chain; its full sequence is Adenosylhomocysteinase (479 aa).

T66, D142, and E203 together coordinate substrate. Position 204 to 206 (204 to 206 (TTT)) interacts with NAD(+). Positions 233 and 237 each coordinate substrate. Residues N238, 267 to 272 (GYGDVG), E290, N325, 346 to 348 (IGH), and N394 each bind NAD(+).

Belongs to the adenosylhomocysteinase family. NAD(+) serves as cofactor.

It localises to the cytoplasm. The enzyme catalyses S-adenosyl-L-homocysteine + H2O = L-homocysteine + adenosine. Its pathway is amino-acid biosynthesis; L-homocysteine biosynthesis; L-homocysteine from S-adenosyl-L-homocysteine: step 1/1. May play a key role in the regulation of the intracellular concentration of adenosylhomocysteine. The polypeptide is Adenosylhomocysteinase (Nitratidesulfovibrio vulgaris (strain DSM 19637 / Miyazaki F) (Desulfovibrio vulgaris)).